The following is a 333-amino-acid chain: Eukaryotic translation initiation factor 2 subunit 2 (333 aa).

Disordered stretches follow at residues methionine 1–lysine 87, isoleucine 98–leucine 117, and glutamate 141–proline 165. At serine 2 the chain carries N-acetylserine. Serine 2 and serine 13 each carry phosphoserine. Positions serine 13–proline 22 are enriched in basic residues. Threonine 36 is subject to Phosphothreonine. Residues glutamate 40–aspartate 51 show a composition bias toward basic and acidic residues. Serine 67 is modified (phosphoserine). Lysine 102 participates in a covalent cross-link: Glycyl lysine isopeptide (Lys-Gly) (interchain with G-Cter in SUMO2). A Phosphoserine modification is found at serine 105. The span at aspartate 106–leucine 117 shows a compositional bias: acidic residues. 2 positions are modified to phosphoserine: serine 158 and serine 218. Lysine 265 and lysine 293 each carry N6-acetyllysine. Residues cysteine 281–cysteine 305 form a C4-type zinc finger.

The protein belongs to the eIF-2-beta/eIF-5 family. Eukaryotic translation initiation factor 2 eIF2 is a heterotrimeric complex composed of an alpha (EIF2S1), a beta (EIF2S2) and a gamma (EIF2S3) chain. eIF2 is member of the 43S pre-initiation complex (43S PIC). eIF2 forms a complex with at least CELF1/CUGBP1, CALR, CALR3, EIF2S1, EIF2S2, HSP90B1 and HSPA5. Interacts with BZW2/5MP1. Interacts with EIF5.

The protein resides in the cytoplasm. It is found in the cytosol. Its function is as follows. Component of the eIF2 complex that functions in the early steps of protein synthesis by forming a ternary complex with GTP and initiator tRNA. This complex binds to a 40S ribosomal subunit, followed by mRNA binding to form a 43S pre-initiation complex (43S PIC). Junction of the 60S ribosomal subunit to form the 80S initiation complex is preceded by hydrolysis of the GTP bound to eIF2 and release of an eIF2-GDP binary complex. In order for eIF2 to recycle and catalyze another round of initiation, the GDP bound to eIF2 must exchange with GTP by way of a reaction catalyzed by eIF2B. The sequence is that of Eukaryotic translation initiation factor 2 subunit 2 (EIF2S2) from Bos taurus (Bovine).